The chain runs to 372 residues: Alginate lyase (372 aa).

Positions 1-22 (MKTRLALPCLLGSLLLSSAVHA) are cleaved as a signal peptide. Substrate contacts are provided by residues 61-62 (SK), 134-135 (HT), and Y252.

This sequence belongs to the polysaccharide lyase 5 family.

The protein resides in the periplasm. It catalyses the reaction Eliminative cleavage of alginate to give oligosaccharides with 4-deoxy-alpha-L-erythro-hex-4-enuronosyl groups at their non-reducing ends and beta-D-mannuronate at their reducing end.. Monovalent cations such as potassium and sodium enhance activity, as well as a combined action of these cations with magnesium. However, other cations like calcium, cobalt, manganese and zinc, or the presence of EDTA, do not affect the enzymatic activity. Catalyzes the depolymerization of alginate by cleaving the beta-1,4 glycosidic bond between two adjacent sugar residues via a beta-elimination mechanism. Degrades deacetylated polymannuronate alginate more efficiently than non-deacetylated polyM. Is able to degrade its own alginate, but at a lower efficiency than that produced from M.pyriferia and P.aeruginosa. May serve to degrade mislocalized alginate that is trapped in the periplasmic space. The chain is Alginate lyase from Azotobacter chroococcum mcd 1.